Here is a 1801-residue protein sequence, read N- to C-terminus: Laminin subunit beta-2 (1801 aa).

Residues 1 to 35 form the signal peptide; the sequence is MEWASGKPGRGRQGQPVPWELRLGLLLSVLAATLA. The region spanning 46-285 is the Laminin N-terminal domain; that stretch reads SRGSCYPATG…ALYELVIRGN (240 aa). A glycan (N-linked (GlcNAc...) asparagine) is linked at N251. Cystine bridges form between C286-C295, C288-C313, C315-C324, C327-C347, C350-C359, C352-C377, C380-C389, C392-C410, C413-C426, C415-C441, C443-C452, C455-C470, C473-C487, C475-C494, C496-C505, C508-C522, C525-C537, C527-C544, and C546-C555. Laminin EGF-like domains are found at residues 286–349, 350–412, 413–472, and 473–524; these read CFCY…ACRK, CECN…ACRP, CDCD…GCQR, and CQCN…GCRP. N371 is a glycosylation site (N-linked (GlcNAc...) asparagine). Positions 525–555 constitute a Laminin EGF-like 5; truncated domain; the sequence is CDCDVGGALDPQCDEATGQCPCRPHMIGRRC. The Laminin IV type B domain maps to 564–780; that stretch reads RPFLDHLTWE…LLISASSLVY (217 aa). Disulfide bonds link C786–C798, C788–C805, C807–C816, C819–C831, C834–C846, C836–C853, C855–C864, C867–C877, C880–C889, C882–C896, C899–C908, C911–C927, C930–C946, C932–C957, C959–C968, C971–C986, C989–C1003, C991–C1010, C1013–C1022, C1025–C1038, C1041–C1061, C1043–C1068, C1070–C1079, C1082–C1095, C1098–C1110, C1100–C1117, C1119–C1128, C1131–C1143, C1146–C1158, C1148–C1165, C1167–C1176, and C1179–C1190. Laminin EGF-like domains are found at residues 786–833, 834–879, 880–929, 930–988, 989–1040, 1041–1097, 1098–1145, and 1146–1192; these read CQCD…GCQA, CQCS…NCRP, CVCN…QCRP, CPCP…RCQL, CECS…SCHR, CTCN…GCQP, CACH…QCRA, and CDCD…ACHP. N-linked (GlcNAc...) asparagine glycosylation occurs at N1088. A domain II region spans residues 1193–1412; sequence CHACFGDWDR…LSLTGVNELV (220 aa). N1252 carries an N-linked (GlcNAc...) asparagine glycan. Residues 1259–1306 are a coiled coil; sequence AKLVEATEGLRHEIGKTTERLTQLEAELTDVQDENFNANHALSGLERD. N-linked (GlcNAc...) asparagine glycosylation is found at N1311 and N1351. The domain alpha stretch occupies residues 1413–1445; the sequence is CGAPGDAPCATSPCGGAGCRDEDGQPRCGGLGC. The segment at 1446 to 1801 is domain I; that stretch reads SGAAATADLA…LQVQIYNTCQ (356 aa). Residues 1475–1529 are a coiled coil; that stretch reads GILSRVSETRRQAEEAQQRAQAALDKANASRGQVEQANQELRELIQNVKDFLSQE. An N-linked (GlcNAc...) asparagine glycan is attached at N1502. S1535 bears the Phosphoserine mark. Positions 1576-1793 form a coiled coil; the sequence is LAHTMGDVRR…RSVLQAINLQ (218 aa). Residues 1684 to 1694 show a composition bias toward low complexity; sequence ASTAEETAGSA. The interval 1684 to 1703 is disordered; sequence ASTAEETAGSAQSRAREAEK.

As to quaternary structure, laminin is a complex glycoprotein, consisting of three different polypeptide chains (alpha, beta, gamma), which are bound to each other by disulfide bonds into a cross-shaped molecule comprising one long and three short arms with globules at each end. Beta-2 is a subunit of laminin-3 (laminin-121 or S-laminin), laminin-4 (laminin-221 or S-merosin), laminin-7 (laminin-321 or KS-laminin), laminin-9 (laminin-421), laminin-11 (laminin-521), laminin-14 (laminin-423) and laminin-15 (laminin-523). As to expression, found in the basement membranes (major component). S-laminin is concentrated in the synaptic cleft of the neuromuscular junction.

Its subcellular location is the secreted. It is found in the extracellular space. It localises to the extracellular matrix. The protein resides in the basement membrane. Its function is as follows. Binding to cells via a high affinity receptor, laminin is thought to mediate the attachment, migration and organization of cells into tissues during embryonic development by interacting with other extracellular matrix components. The chain is Laminin subunit beta-2 (Lamb2) from Rattus norvegicus (Rat).